Here is a 310-residue protein sequence, read N- to C-terminus: Porphobilinogen deaminase (310 aa).

The residue at position 236 (cysteine 236) is an S-(dipyrrolylmethanemethyl)cysteine.

This sequence belongs to the HMBS family. Monomer. Dipyrromethane is required as a cofactor.

It catalyses the reaction 4 porphobilinogen + H2O = hydroxymethylbilane + 4 NH4(+). It participates in porphyrin-containing compound metabolism; protoporphyrin-IX biosynthesis; coproporphyrinogen-III from 5-aminolevulinate: step 2/4. In terms of biological role, tetrapolymerization of the monopyrrole PBG into the hydroxymethylbilane pre-uroporphyrinogen in several discrete steps. This is Porphobilinogen deaminase from Nitratiruptor sp. (strain SB155-2).